Consider the following 839-residue polypeptide: Heat shock 70 kDa protein 4L (839 aa).

2 positions are modified to phosphoserine: serine 74 and serine 508. The segment covering leucine 503–glycine 554 has biased composition (basic and acidic residues). Residues leucine 503–arginine 567 are disordered. Threonine 545 is subject to Phosphothreonine. Residue serine 579 is modified to Phosphoserine. Residue threonine 761 is modified to Phosphothreonine. Residues isoleucine 786 to aspartate 839 are disordered. 2 stretches are compositionally biased toward basic and acidic residues: residues proline 791–serine 804 and threonine 818–aspartate 839.

This sequence belongs to the heat shock protein 70 family. As to quaternary structure, homodimer.

It localises to the cytoplasm. Its subcellular location is the nucleus. In terms of biological role, possesses chaperone activity in vitro where it inhibits aggregation of citrate synthase. The protein is Heat shock 70 kDa protein 4L (HSPA4L) of Homo sapiens (Human).